A 368-amino-acid polypeptide reads, in one-letter code: Cytochrome b (368 aa).

4 consecutive transmembrane segments (helical) span residues 33–53 (FGSLLGLCLITQILTGIFLAM), 77–99 (WLIRSIHANSASMFFICIYTHTG), 112–132 (TWMVGVTLLLITILTAFLGYV), and 178–198 (FYALHFLFPFLISALSLMHII). The heme b site is built by His83 and His97. Residues His182 and His196 each coordinate heme b. A ubiquinone is bound at residue His201. The next 4 membrane-spanning stretches (helical) occupy residues 224–244 (FSAKDLIGVILLWIMLGSVVL), 288–308 (LGGVLALIMSIAILYFLPMMN), 323–343 (IAFWLLVTNFIVLMWIGSKPV), and 345–365 (SPFEEIGQIMTVTYFSIYMIM).

Belongs to the cytochrome b family. In terms of assembly, the main subunits of complex b-c1 are: cytochrome b, cytochrome c1 and the Rieske protein. The cofactor is heme b.

It is found in the mitochondrion inner membrane. Its function is as follows. Component of the ubiquinol-cytochrome c reductase complex (complex III or cytochrome b-c1 complex) that is part of the mitochondrial respiratory chain. The b-c1 complex mediates electron transfer from ubiquinol to cytochrome c. Contributes to the generation of a proton gradient across the mitochondrial membrane that is then used for ATP synthesis. This is Cytochrome b (mt:Cyt-b) from Bugula neritina (Brown bryozoan).